Consider the following 350-residue polypeptide: Biotin synthase (350 aa).

One can recognise a Radical SAM core domain in the interval 38–257 (NKVQVSTLLS…AVARIIMPMS (220 aa)). Residues Cys53, Cys57, and Cys60 each coordinate [4Fe-4S] cluster. Positions 97, 128, 188, and 260 each coordinate [2Fe-2S] cluster.

The protein belongs to the radical SAM superfamily. Biotin synthase family. As to quaternary structure, homodimer. Requires [4Fe-4S] cluster as cofactor. [2Fe-2S] cluster is required as a cofactor.

It carries out the reaction (4R,5S)-dethiobiotin + (sulfur carrier)-SH + 2 reduced [2Fe-2S]-[ferredoxin] + 2 S-adenosyl-L-methionine = (sulfur carrier)-H + biotin + 2 5'-deoxyadenosine + 2 L-methionine + 2 oxidized [2Fe-2S]-[ferredoxin]. It functions in the pathway cofactor biosynthesis; biotin biosynthesis; biotin from 7,8-diaminononanoate: step 2/2. Functionally, catalyzes the conversion of dethiobiotin (DTB) to biotin by the insertion of a sulfur atom into dethiobiotin via a radical-based mechanism. This chain is Biotin synthase, found in Photobacterium profundum (strain SS9).